The primary structure comprises 785 residues: E3 UFM1-protein ligase 1 homolog (785 aa).

Residues 396–416 (MKHQDVIPDKESAENKADKRD) are compositionally biased toward basic and acidic residues. The tract at residues 396 to 473 (MKHQDVIPDK…KSAGGKKGAK (78 aa)) is disordered. A compositionally biased stretch (basic residues) spans 439–449 (KSTKKHARGHR).

Belongs to the UFL1 family.

Its function is as follows. E3 UFM1-protein ligase that mediates ufmylation of target proteins. This Culex quinquefasciatus (Southern house mosquito) protein is E3 UFM1-protein ligase 1 homolog.